Consider the following 270-residue polypeptide: Hydroxyethylthiazole kinase (270 aa).

Methionine 47 is a binding site for substrate. ATP-binding residues include arginine 123 and threonine 169. Glycine 196 serves as a coordination point for substrate.

The protein belongs to the Thz kinase family. The cofactor is Mg(2+).

The enzyme catalyses 5-(2-hydroxyethyl)-4-methylthiazole + ATP = 4-methyl-5-(2-phosphooxyethyl)-thiazole + ADP + H(+). It functions in the pathway cofactor biosynthesis; thiamine diphosphate biosynthesis; 4-methyl-5-(2-phosphoethyl)-thiazole from 5-(2-hydroxyethyl)-4-methylthiazole: step 1/1. Its function is as follows. Catalyzes the phosphorylation of the hydroxyl group of 4-methyl-5-beta-hydroxyethylthiazole (THZ). The protein is Hydroxyethylthiazole kinase of Roseiflexus sp. (strain RS-1).